Reading from the N-terminus, the 333-residue chain is Lipoyl synthase (333 aa).

A compositionally biased stretch (polar residues) spans Met1–Gln15. Residues Met1 to Thr34 are disordered. Residues Cys80, Cys85, Cys91, Cys106, Cys110, Cys113, and Ser320 each contribute to the [4Fe-4S] cluster site. In terms of domain architecture, Radical SAM core spans Cys91 to Thr309.

It belongs to the radical SAM superfamily. Lipoyl synthase family. It depends on [4Fe-4S] cluster as a cofactor.

The protein resides in the cytoplasm. It carries out the reaction [[Fe-S] cluster scaffold protein carrying a second [4Fe-4S](2+) cluster] + N(6)-octanoyl-L-lysyl-[protein] + 2 oxidized [2Fe-2S]-[ferredoxin] + 2 S-adenosyl-L-methionine + 4 H(+) = [[Fe-S] cluster scaffold protein] + N(6)-[(R)-dihydrolipoyl]-L-lysyl-[protein] + 4 Fe(3+) + 2 hydrogen sulfide + 2 5'-deoxyadenosine + 2 L-methionine + 2 reduced [2Fe-2S]-[ferredoxin]. It functions in the pathway protein modification; protein lipoylation via endogenous pathway; protein N(6)-(lipoyl)lysine from octanoyl-[acyl-carrier-protein]: step 2/2. Functionally, catalyzes the radical-mediated insertion of two sulfur atoms into the C-6 and C-8 positions of the octanoyl moiety bound to the lipoyl domains of lipoate-dependent enzymes, thereby converting the octanoylated domains into lipoylated derivatives. This chain is Lipoyl synthase, found in Bordetella bronchiseptica (strain ATCC BAA-588 / NCTC 13252 / RB50) (Alcaligenes bronchisepticus).